Consider the following 205-residue polypeptide: Cerebellin-3 (205 aa).

Residues 1–32 (MLGAKPHWLPGPLHSPGLPLVLVLLALGAGWA) form the signal peptide. Residues 67–205 (APPGRVAFAA…SFSGFLIFPL (139 aa)) form the C1q domain. A necessary for interaction with CBLN3, and homotrimerization region spans residues 72–205 (VAFAAVRSHH…SFSGFLIFPL (134 aa)). Asn90 carries N-linked (GlcNAc...) asparagine glycosylation.

Heterohexamer; disulfide-linked heterotrimers. Interacts with CBLN1. May also form oligomers with CBLN2 and CBLN4.

The protein resides in the endoplasmic reticulum. The protein localises to the golgi apparatus. Its subcellular location is the cis-Golgi network. It localises to the secreted. It is found in the synapse. May be involved in synaptic functions in the CNS. This chain is Cerebellin-3 (CBLN3), found in Homo sapiens (Human).